Consider the following 206-residue polypeptide: Histidine biosynthesis bifunctional protein HisIE (206 aa).

Residues 1–114 form a phosphoribosyl-AMP cyclohydrolase region; sequence MLKKINFIDI…FQVPSENLFF (114 aa). The segment at 115–206 is phosphoribosyl-ATP pyrophosphohydrolase; sequence LHDLDCMLKF…NLKMRSNKQV (92 aa).

This sequence in the N-terminal section; belongs to the PRA-CH family. It in the C-terminal section; belongs to the PRA-PH family.

Its subcellular location is the cytoplasm. The catalysed reaction is 1-(5-phospho-beta-D-ribosyl)-ATP + H2O = 1-(5-phospho-beta-D-ribosyl)-5'-AMP + diphosphate + H(+). It catalyses the reaction 1-(5-phospho-beta-D-ribosyl)-5'-AMP + H2O = 1-(5-phospho-beta-D-ribosyl)-5-[(5-phospho-beta-D-ribosylamino)methylideneamino]imidazole-4-carboxamide. The protein operates within amino-acid biosynthesis; L-histidine biosynthesis; L-histidine from 5-phospho-alpha-D-ribose 1-diphosphate: step 2/9. Its pathway is amino-acid biosynthesis; L-histidine biosynthesis; L-histidine from 5-phospho-alpha-D-ribose 1-diphosphate: step 3/9. In Buchnera aphidicola subsp. Baizongia pistaciae (strain Bp), this protein is Histidine biosynthesis bifunctional protein HisIE (hisI).